The sequence spans 373 residues: MNETDIKFLESAFKKYYFEQFELIRVPERTSEREFGYQKFNSGMTRHISVKDDKELHLLLMQNVPSDVYCSNAYYSFPNLPMNEKDWKEADLIFDIDAKDLNLSCRGNHTLSICNECHEISNNSEKCSKCNSTKLEKKSLPCKNCIDSSKIEVKKLSEILTNDLSVNKDDIQVYFSGNEGFHIYVYNSQFQQNGSRERSELVDYIMFNGAIPEKFGMKKFKPNRNSFPDFDEAGWKGRFSKYVYGSKSKRSKIVSELLSNGYSSFQKTLDDVSENIGTKIDPNVTMDIHRIFRLPGSINSKSGLTKIHCKDLVKFDAYVDSSFLSDDSVEVLANCPIEFKLKNKKFGPYHNEKVSVPTFAAVYMVCKKLATIA.

Residues Asp-95, Asp-97, and Asp-281 contribute to the active site.

The protein belongs to the eukaryotic-type primase small subunit family. In terms of assembly, heterodimer of a small subunit (PriS) and a large subunit (PriL). The cofactor is Mg(2+). Requires Mn(2+) as cofactor.

Its function is as follows. Catalytic subunit of DNA primase, an RNA polymerase that catalyzes the synthesis of short RNA molecules used as primers for DNA polymerase during DNA replication. The small subunit contains the primase catalytic core and has DNA synthesis activity on its own. Binding to the large subunit stabilizes and modulates the activity, increasing the rate of DNA synthesis while decreasing the length of the DNA fragments, and conferring RNA synthesis capability. The DNA polymerase activity may enable DNA primase to also catalyze primer extension after primer synthesis. May also play a role in DNA repair. The protein is DNA primase small subunit PriS of Nitrosopumilus maritimus (strain SCM1).